Consider the following 99-residue polypeptide: Complement inhibitor RaCI7 (99 aa).

Residues 1–24 form the signal peptide; the sequence is MAALNGLVLLLLTISAMFISECYS. Cystine bridges form between Cys-37–Cys-61, Cys-42–Cys-63, and Cys-57–Cys-78.

The protein belongs to the RaCI family. As to expression, expressed in salivary glands.

It localises to the secreted. Functionally, complement inhibitor. Prevents complement-mediated C5 activation by binding to C5. Binds C5 at a different binding site than the other tick complement inhibitors OmCI and CirpT1, and the drug eculizumab. This is Complement inhibitor RaCI7 from Dermacentor andersoni (Rocky mountain wood tick).